The chain runs to 350 residues: C5a anaphylatoxin chemotactic receptor 1 (350 aa).

Residues 1-37 (MDDMCSILTEEELSLYNITDCEFVKPGGLGPVLGPRH) are Extracellular-facing. N-linked (GlcNAc...) asparagine glycosylation occurs at Asn17. A helical membrane pass occupies residues 38–64 (LSALVFYGLVFLLGVPGNALVVWVTGF). Over 65-69 (RMPRS) the chain is Cytoplasmic. Residues 70–93 (VTSLWFLNLALADLLCCLSLPLLM) traverse the membrane as a helical segment. Over 94 to 110 (VPLAMDQHWPFGPVACK) the chain is Extracellular. The cysteines at positions 109 and 187 are disulfide-linked. The helical transmembrane segment at 111–132 (LLKGLLYLIMFCSVLLLVLISL) threads the bilayer. Topologically, residues 133–154 (DRFLLVSWPVWCQNWRRPRKAG) are cytoplasmic. A helical transmembrane segment spans residues 155-174 (WVCVGVWLLALLGSIPQFVY). The Extracellular portion of the chain corresponds to 175-197 (VKEVQLSTSKSECLGLYTVASAW). A helical transmembrane segment spans residues 198 to 223 (ANTTARFLVGFVLPFITIVTCHWVVY). Topologically, residues 224 to 247 (SRARRGSGVGPGRVSEARSRRTLR) are cytoplasmic. A helical transmembrane segment spans residues 248–270 (VIVAVSLSFFLCWFPLHILDFLV). Topologically, residues 271–287 (LSTPRHSSHSANIQLAH) are extracellular. The chain crosses the membrane as a helical span at residues 288–308 (TLALCLAYCNSCLNPLLYVCL). The Cytoplasmic segment spans residues 309 to 350 (GRGFKQNINRSLRNMFNFATEESVTRQSMFKSTSERTQEMNM).

It belongs to the G-protein coupled receptor 1 family. In terms of tissue distribution, high expression in head, kidney and posterior kidney, lower levels in peripheral blood leukocytes and spleen, low expression in brain and gills, heart, intestine and very low expression in liver and muscle.

The protein localises to the cell membrane. Functionally, receptor for the chemotactic and inflammatory peptide anaphylatoxin C5a. This receptor stimulates chemotaxis, granule enzyme release and superoxide anion production. The protein is C5a anaphylatoxin chemotactic receptor 1 (c5ar1) of Oncorhynchus mykiss (Rainbow trout).